Here is a 215-residue protein sequence, read N- to C-terminus: LexA repressor (215 aa).

Positions 28-48 (RAEIAAELGFSSPNAAEEHLR) form a DNA-binding region, H-T-H motif. Active-site for autocatalytic cleavage activity residues include serine 133 and lysine 170.

This sequence belongs to the peptidase S24 family. Homodimer.

The catalysed reaction is Hydrolysis of Ala-|-Gly bond in repressor LexA.. In terms of biological role, represses a number of genes involved in the response to DNA damage (SOS response), including recA and lexA. In the presence of single-stranded DNA, RecA interacts with LexA causing an autocatalytic cleavage which disrupts the DNA-binding part of LexA, leading to derepression of the SOS regulon and eventually DNA repair. This Burkholderia thailandensis (strain ATCC 700388 / DSM 13276 / CCUG 48851 / CIP 106301 / E264) protein is LexA repressor.